A 378-amino-acid chain; its full sequence is Erythronate-4-phosphate dehydrogenase (378 aa).

Substrate is bound by residues S45 and T66. Residues D146 and T175 each contribute to the NAD(+) site. Residue R208 is part of the active site. Residue D232 coordinates NAD(+). E237 is an active-site residue. The active-site Proton donor is the H254. G257 contributes to the NAD(+) binding site. Y258 contacts substrate.

Belongs to the D-isomer specific 2-hydroxyacid dehydrogenase family. PdxB subfamily. In terms of assembly, homodimer.

It localises to the cytoplasm. The catalysed reaction is 4-phospho-D-erythronate + NAD(+) = (R)-3-hydroxy-2-oxo-4-phosphooxybutanoate + NADH + H(+). The protein operates within cofactor biosynthesis; pyridoxine 5'-phosphate biosynthesis; pyridoxine 5'-phosphate from D-erythrose 4-phosphate: step 2/5. Catalyzes the oxidation of erythronate-4-phosphate to 3-hydroxy-2-oxo-4-phosphonooxybutanoate. This is Erythronate-4-phosphate dehydrogenase from Escherichia coli O7:K1 (strain IAI39 / ExPEC).